The sequence spans 185 residues: MVLSSQLSVGMFISTKDGLYKVVSVSKVSGNKGDTFIKVSLQAAGSDVTVERNFKAGQEVKEAQFEPRNLEYLYLEEDKYLFLDLGNYDKIYIPKEIMKDNAMFLKAGVTVFALVHEGTVFSMELPHFLELMVAKTDFPGDSLSLSGGAKKALLETGVEVLVPPFVEIGDVIKVDTRTCEYIQRV.

It belongs to the elongation factor P family.

The protein localises to the cytoplasm. It functions in the pathway protein biosynthesis; polypeptide chain elongation. Involved in peptide bond synthesis. Stimulates efficient translation and peptide-bond synthesis on native or reconstituted 70S ribosomes in vitro. Probably functions indirectly by altering the affinity of the ribosome for aminoacyl-tRNA, thus increasing their reactivity as acceptors for peptidyl transferase. This Chlamydia trachomatis serovar D (strain ATCC VR-885 / DSM 19411 / UW-3/Cx) protein is Elongation factor P 1 (efp1).